A 130-amino-acid chain; its full sequence is Small ribosomal subunit protein uS11c (130 aa).

Belongs to the universal ribosomal protein uS11 family. As to quaternary structure, part of the 30S ribosomal subunit.

Its subcellular location is the plastid. The protein resides in the chloroplast. The sequence is that of Small ribosomal subunit protein uS11c from Psilotum nudum (Whisk fern).